A 299-amino-acid chain; its full sequence is NAD kinase (299 aa).

Catalysis depends on D78, which acts as the Proton acceptor. Residues 78–79 (DG), 151–152 (ND), K162, R179, D181, 192–197 (TAYALS), and Q252 contribute to the NAD(+) site.

It belongs to the NAD kinase family. It depends on a divalent metal cation as a cofactor.

The protein localises to the cytoplasm. It catalyses the reaction NAD(+) + ATP = ADP + NADP(+) + H(+). In terms of biological role, involved in the regulation of the intracellular balance of NAD and NADP, and is a key enzyme in the biosynthesis of NADP. Catalyzes specifically the phosphorylation on 2'-hydroxyl of the adenosine moiety of NAD to yield NADP. In Coxiella burnetii (strain CbuG_Q212) (Coxiella burnetii (strain Q212)), this protein is NAD kinase.